The following is a 198-amino-acid chain: Uracil phosphoribosyltransferase homolog (198 aa).

This sequence belongs to the UPRTase family.

It is found in the plastid. Its subcellular location is the chloroplast. In Porphyra purpurea (Red seaweed), this protein is Uracil phosphoribosyltransferase homolog.